Here is a 271-residue protein sequence, read N- to C-terminus: L-aspartate dehydrogenase (271 aa).

The NAD(+) site is built by A124 and N192. The active site involves H222.

It belongs to the L-aspartate dehydrogenase family.

The enzyme catalyses L-aspartate + NADP(+) + H2O = oxaloacetate + NH4(+) + NADPH + H(+). The catalysed reaction is L-aspartate + NAD(+) + H2O = oxaloacetate + NH4(+) + NADH + H(+). The protein operates within cofactor biosynthesis; NAD(+) biosynthesis; iminoaspartate from L-aspartate (dehydrogenase route): step 1/1. In terms of biological role, specifically catalyzes the NAD or NADP-dependent dehydrogenation of L-aspartate to iminoaspartate. This is L-aspartate dehydrogenase from Methanosarcina barkeri (strain Fusaro / DSM 804).